Reading from the N-terminus, the 222-residue chain is Cytidylate kinase (222 aa).

Position 10–18 (10–18) interacts with ATP; sequence GPAGAGKST.

It belongs to the cytidylate kinase family. Type 1 subfamily.

It localises to the cytoplasm. The catalysed reaction is CMP + ATP = CDP + ADP. It carries out the reaction dCMP + ATP = dCDP + ADP. The chain is Cytidylate kinase from Halalkalibacterium halodurans (strain ATCC BAA-125 / DSM 18197 / FERM 7344 / JCM 9153 / C-125) (Bacillus halodurans).